Consider the following 192-residue polypeptide: MIDDLIQKEFLAHKEALKKSLESLQEMLKQSVHLLIETLENQGKILICGNGGSASDAQHFAAELTGRYKLERKGLSAISLSTDTSALTAIANDYGYEEVFARQVEALGNKEDVLIGISTSGNSKNVLKAYEKAKDLGMKTLSLAGRDGGKMKPLSDMALIVPSDDTPRIQEMHILMIHILCDCIERHFAHKN.

The region spanning 35 to 192 is the SIS domain; sequence LIETLENQGK…CIERHFAHKN (158 aa). 50–52 is a substrate binding site; it reads NGG. Positions 59 and 63 each coordinate Zn(2+). Residues E63, 92–93, 118–120, S123, and Q170 each bind substrate; these read ND and STS. Zn(2+) contacts are provided by Q170 and H178.

Belongs to the SIS family. GmhA subfamily. Homotetramer. Zn(2+) is required as a cofactor.

It localises to the cytoplasm. The enzyme catalyses 2 D-sedoheptulose 7-phosphate = D-glycero-alpha-D-manno-heptose 7-phosphate + D-glycero-beta-D-manno-heptose 7-phosphate. It functions in the pathway carbohydrate biosynthesis; D-glycero-D-manno-heptose 7-phosphate biosynthesis; D-glycero-alpha-D-manno-heptose 7-phosphate and D-glycero-beta-D-manno-heptose 7-phosphate from sedoheptulose 7-phosphate: step 1/1. Functionally, catalyzes the isomerization of sedoheptulose 7-phosphate in D-glycero-D-manno-heptose 7-phosphate. This chain is Phosphoheptose isomerase, found in Helicobacter pylori (strain P12).